The following is a 718-amino-acid chain: Probable protein S-acyltransferase 19 (718 aa).

Transmembrane regions (helical) follow at residues 16 to 36 (VVAI…FAPF) and 41 to 61 (IWEY…FVLY). The interval 100–125 (ETGSHLQSSPSVASRTSTLPNSSVKG) is disordered. Polar residues predominate over residues 103–124 (SHLQSSPSVASRTSTLPNSSVK). The DHHC domain occupies 174–224 (LFCTLCNAEVRKFSKHCRSCDKCVDCFDHHCRWLNNCVGRKNYMTFISLMA). The S-palmitoyl cysteine intermediate role is filled by cysteine 204. Transmembrane regions (helical) follow at residues 222–242 (LMAV…AVIV) and 277–297 (AVSM…MLLI). Disordered regions lie at residues 454–511 (SSVS…HVHE), 598–649 (PATT…QQQQ), and 664–718 (GPLV…GTRK). Composition is skewed to polar residues over residues 479–488 (CRNSYAPSQG) and 598–626 (PATT…TQNP). Basic and acidic residues predominate over residues 673-687 (DGLRHDGDSGREGQD).

Belongs to the DHHC palmitoyltransferase family.

The protein resides in the cell membrane. The enzyme catalyses L-cysteinyl-[protein] + hexadecanoyl-CoA = S-hexadecanoyl-L-cysteinyl-[protein] + CoA. Its function is as follows. Palmitoyl acyltransferase. In Arabidopsis thaliana (Mouse-ear cress), this protein is Probable protein S-acyltransferase 19 (PAT19).